Reading from the N-terminus, the 251-residue chain is Flap endonuclease Xni (251 aa).

Residue aspartate 104 coordinates Mg(2+). Residues 160-249 (VLPRQLPDYW…IDGNLQQLRL (90 aa)) enclose the 5'-3' exonuclease domain. Positions 171, 172, 180, 182, and 185 each coordinate K(+). An interaction with DNA region spans residues 184–189 (GIGPKS).

The protein belongs to the Xni family. Mg(2+) serves as cofactor. K(+) is required as a cofactor.

In terms of biological role, has flap endonuclease activity. During DNA replication, flap endonucleases cleave the 5'-overhanging flap structure that is generated by displacement synthesis when DNA polymerase encounters the 5'-end of a downstream Okazaki fragment. This Salmonella newport (strain SL254) protein is Flap endonuclease Xni.